Consider the following 333-residue polypeptide: Terminal uridylyltransferase 4 (333 aa).

UTP contacts are provided by residues serine 54 and 65-68 (SDVD). Residues aspartate 66 and aspartate 68 each contribute to the Mg(2+) site. Arginine 121 is a binding site for RNA. Residues 144–148 (GVRNS), lysine 169, lysine 173, and 188–189 (SY) contribute to the UTP site. The PAP-associated domain maps to 237-302 (LGTQVLDFLH…WCIEDPYELN (66 aa)).

The protein belongs to the DNA polymerase type-B-like family. As to quaternary structure, monomer. The cofactor is Mg(2+). Mn(2+) is required as a cofactor.

It catalyses the reaction RNA(n) + UTP = RNA(n)-3'-uridine ribonucleotide + diphosphate. The 3' uridylated RNA substrate is involved in the selective incorporation of UTP; UTP binding is favored due to the constraint posed on the positioning of the NTP base by the continuous stacking interactions between Tyr-189 side chain, the bound NTP, and the terminal nucleoside base of the RNA substrate. In terms of biological role, terminal uridylyltransferase which, specifically, catalyzes the addition of Us to the 3'-hydroxyl group of single-stranded RNAs with a 3'-terminal U. This Trypanosoma brucei brucei (strain 927/4 GUTat10.1) protein is Terminal uridylyltransferase 4.